Here is a 1226-residue protein sequence, read N- to C-terminus: Methionine synthase (1226 aa).

The Hcy-binding domain maps to 6-326 (RQQIEAQLKQ…EHIRQMAQAV (321 aa)). Residues C248, C311, and C312 each coordinate Zn(2+). Positions 357 to 618 (FINVGERTNV…VPEKLREAVE (262 aa)) constitute a Pterin-binding domain. The B12-binding N-terminal domain occupies 651–745 (SALEWRTWPV…FINAEKQSGS (95 aa)). Methylcob(III)alamin contacts are provided by residues E695, 757 to 761 (GDVHD), H760, S805, T809, and A861. The B12-binding domain occupies 747–882 (NGKILLATVK…SDERRPAFIE (136 aa)). An AdoMet activation domain is found at 898–1226 (KKPRTKPVTL…EKWLGPNING (329 aa)). Residues D948, R1136, and 1191 to 1192 (YF) each bind S-adenosyl-L-methionine.

It belongs to the vitamin-B12 dependent methionine synthase family. The cofactor is methylcob(III)alamin. Zn(2+) serves as cofactor.

It catalyses the reaction (6S)-5-methyl-5,6,7,8-tetrahydrofolate + L-homocysteine = (6S)-5,6,7,8-tetrahydrofolate + L-methionine. The protein operates within amino-acid biosynthesis; L-methionine biosynthesis via de novo pathway; L-methionine from L-homocysteine (MetH route): step 1/1. Catalyzes the transfer of a methyl group from methyl-cobalamin to homocysteine, yielding enzyme-bound cob(I)alamin and methionine. Subsequently, remethylates the cofactor using methyltetrahydrofolate. The chain is Methionine synthase (metH) from Vibrio parahaemolyticus serotype O3:K6 (strain RIMD 2210633).